We begin with the raw amino-acid sequence, 231 residues long: Chromosome partition protein MukE (231 aa).

A disordered region spans residues 195 to 231 (MIRDGEAMPVEGSLSLKDDSDDNDRTDDTAPETGEDE). Over residues 213-231 (DSDDNDRTDDTAPETGEDE) the composition is skewed to acidic residues.

The protein belongs to the MukE family. In terms of assembly, interacts, and probably forms a ternary complex, with MukF and MukB. The complex formation is stimulated by calcium or magnesium.

The protein resides in the cytoplasm. It is found in the nucleoid. Functionally, involved in chromosome condensation, segregation and cell cycle progression. May participate in facilitating chromosome segregation by condensation DNA from both sides of a centrally located replisome during cell division. Probably acts via its interaction with MukB and MukF. The sequence is that of Chromosome partition protein MukE from Pectobacterium atrosepticum (strain SCRI 1043 / ATCC BAA-672) (Erwinia carotovora subsp. atroseptica).